A 236-amino-acid chain; its full sequence is Small ribosomal subunit protein uS2c (236 aa).

It belongs to the universal ribosomal protein uS2 family.

It is found in the plastid. The protein resides in the chloroplast. The polypeptide is Small ribosomal subunit protein uS2c (rps2) (Manihot esculenta (Cassava)).